The chain runs to 494 residues: Cytochrome P450 2C44 (494 aa).

An N-terminal signal peptide occupies residues 1–25; that stretch reads MELLGLPTLALLVLVMSLSLLSVWT. Ser-131 is subject to Phosphoserine. An N6-acetyllysine mark is found at Lys-253 and Lys-379. Cys-439 serves as a coordination point for heme.

Belongs to the cytochrome P450 family. The cofactor is heme. In terms of tissue distribution, highly expressed in liver, particularly in hepatocytes and bile duct epithelial cells (at protein level). Expressed in nephron segments. Prominent expression is detected in proximal tubules at the corticomedullary junction (at protein level). Also expressed in renal cortical collecting duct. Lower expression levels are detected in adrenal glands.

Its subcellular location is the endoplasmic reticulum membrane. It is found in the microsome membrane. The enzyme catalyses (5Z,8Z,11Z,14Z)-eicosatetraenoate + reduced [NADPH--hemoprotein reductase] + O2 = (8R,9S)-epoxy-(5Z,11Z,14Z)-eicosatrienoate + oxidized [NADPH--hemoprotein reductase] + H2O + H(+). It carries out the reaction (5Z,8Z,11Z,14Z)-eicosatetraenoate + reduced [NADPH--hemoprotein reductase] + O2 = (11R,12S)-epoxy-(5Z,8Z,14Z)-eicosatrienoate + oxidized [NADPH--hemoprotein reductase] + H2O + H(+). The catalysed reaction is (5Z,8Z,11Z,14Z)-eicosatetraenoate + reduced [NADPH--hemoprotein reductase] + O2 = 14,15-epoxy-(5Z,8Z,11Z)-eicosatrienoate + oxidized [NADPH--hemoprotein reductase] + H2O + H(+). It catalyses the reaction (5Z,8Z,11Z,14Z,17Z)-eicosapentaenoate + reduced [NADPH--hemoprotein reductase] + O2 = 8,9-epoxy-(5Z,11Z,14Z,17Z)-eicosatetraenoate + oxidized [NADPH--hemoprotein reductase] + H2O + H(+). The enzyme catalyses (5Z,8Z,11Z,14Z,17Z)-eicosapentaenoate + reduced [NADPH--hemoprotein reductase] + O2 = 11,12-epoxy-(5Z,8Z,14Z,17Z)-eicosatetraenoate + oxidized [NADPH--hemoprotein reductase] + H2O + H(+). It carries out the reaction (5Z,8Z,11Z,14Z,17Z)-eicosapentaenoate + reduced [NADPH--hemoprotein reductase] + O2 = 14,15-epoxy-(5Z,8Z,11Z,17Z)-eicosatetraenoate + oxidized [NADPH--hemoprotein reductase] + H2O + H(+). The catalysed reaction is (5Z,8Z,11Z,14Z,17Z)-eicosapentaenoate + reduced [NADPH--hemoprotein reductase] + O2 = (17R,18S)-epoxy-(5Z,8Z,11Z,14Z)-eicosatetraenoate + oxidized [NADPH--hemoprotein reductase] + H2O + H(+). It catalyses the reaction (5Z,8Z,11Z,14Z,17Z)-eicosapentaenoate + reduced [NADPH--hemoprotein reductase] + O2 = (17S,18R)-epoxy-(5Z,8Z,11Z,14Z)-eicosatetraenoate + oxidized [NADPH--hemoprotein reductase] + H2O + H(+). The enzyme catalyses 20-hydroxy-(5Z,8Z,11Z,14Z)-eicosatetraenoate + reduced [NADPH--hemoprotein reductase] + O2 = 20-hydroxy-8,9-epoxy-(5Z,11Z,14Z)-eicosatrienoate + oxidized [NADPH--hemoprotein reductase] + H2O + H(+). Its pathway is lipid metabolism; arachidonate metabolism. Its function is as follows. A cytochrome P450 monooxygenase involved in polyunsaturated fatty acids (PUFAs) metabolism and signaling. Catalyzes preferentially the epoxidation of double bonds of PUFAs. Converts arachidonic acid (ARA, C20:4(n-6)) primarily to stereospecific products 8R,9S-epoxyeicosatrienoate (EET) and 11R,12S-EET. Plays a major role in the formation of EETs and hydroxy-EETs (HEETs) in kidney. Via EETs may inhibit the epithelial sodium channels (ENaCs) in nephron segments, preventing excessive sodium absorption during high dietary salt intake. Participates in the formation of anti-inflammatory hydroxyepoxyeicosatrienoic acids (HEETs) by converting 20-hydroxyeicosatetraenoic acid (20-HETE) to 20,8,9-HEET, an activator of PPARA. Metabolizes eicosapentaenoic acid (EPA, C20:5(n-3)) to epoxyeicosatetraenoic acid (EETeTr) regioisomers, 8,9-, 11,12-, 14,15-, and 17,18- EETeTr, preferentially producing 17R,18S enantiomer. Mechanistically, uses molecular oxygen inserting one oxygen atom into a substrate, and reducing the second into a water molecule, with two electrons provided by NADPH via cytochrome P450 reductase (CPR; NADPH-ferrihemoprotein reductase). This is Cytochrome P450 2C44 from Mus musculus (Mouse).